The primary structure comprises 243 residues: uncharacterized protein (243 aa).

This is an uncharacterized protein from Acidianus bottle-shaped virus (isolate Italy/Pozzuoli) (ABV).